A 1117-amino-acid polypeptide reads, in one-letter code: DNA polymerase (1117 aa).

The disordered stretch occupies residues 591–621; that stretch reads ESSPVASFEEDSEQTSDSSLGEVSSQGSSDG. Positions 606–618 are enriched in low complexity; that stretch reads SDSSLGEVSSQGS.

This sequence belongs to the DNA polymerase type-B family.

It is found in the host nucleus. It catalyses the reaction DNA(n) + a 2'-deoxyribonucleoside 5'-triphosphate = DNA(n+1) + diphosphate. The sequence is that of DNA polymerase from Cavia porcellus (Guinea pig).